Consider the following 876-residue polypeptide: Alanine--tRNA ligase (876 aa).

Zn(2+) is bound by residues His-565, His-569, Cys-667, and His-671.

The protein belongs to the class-II aminoacyl-tRNA synthetase family. It depends on Zn(2+) as a cofactor.

The protein resides in the cytoplasm. The enzyme catalyses tRNA(Ala) + L-alanine + ATP = L-alanyl-tRNA(Ala) + AMP + diphosphate. Catalyzes the attachment of alanine to tRNA(Ala) in a two-step reaction: alanine is first activated by ATP to form Ala-AMP and then transferred to the acceptor end of tRNA(Ala). Also edits incorrectly charged Ser-tRNA(Ala) and Gly-tRNA(Ala) via its editing domain. In Staphylococcus aureus (strain MSSA476), this protein is Alanine--tRNA ligase.